We begin with the raw amino-acid sequence, 565 residues long: Effector protease OspD3 (565 aa).

This sequence belongs to the Toxin_15 family.

It localises to the secreted. Functionally, effector protease that disrupts necroptosis in host cells by mediating proteolytic cleavage of host RIPK1 and RIPK3. The polypeptide is Effector protease OspD3 (Shigella flexneri).